The following is a 15281-amino-acid chain: Cyclosporin synthetase simA (15281 aa).

The condensation 1 stretch occupies residues 34–463 (SFAQGRLWFL…AVHVKTMPLT (430 aa)). The tract at residues 513–918 (SYSELDHKSD…NSDQVRDAAV (406 aa)) is adenylation 1. The Carrier 1 domain maps to 1026 to 1100 (APRNEIEAVL…DLAATIQRGS (75 aa)). Serine 1060 bears the O-(pantetheine 4'-phosphoryl)serine mark. The interval 1118–1549 (SFAQGRLWFL…QTPIMTMPLT (432 aa)) is condensation 2. Residues 1599 to 2004 (SYAELDQRSD…SSAGVHDAVV (406 aa)) are adenylation 2. The tract at residues 2067–2251 (SWTSMYDGTL…LEELEEELLV (185 aa)) is methyltransferase (M) domain 1. In terms of domain architecture, Carrier 2 spans 2524-2598 (APRDSIEAII…DLAATIQQDT (75 aa)). At serine 2558 the chain carries O-(pantetheine 4'-phosphoryl)serine. The interval 2616-3044 (SFAQGRLWFL…EPDMPVASMA (429 aa)) is condensation 3. An adenylation 3 region spans residues 3096 to 3498 (SYADLDRKSD…SHDLVTDAAV (403 aa)). A methyltransferase (M) domain 2 region spans residues 3562–3749 (SMYDGSLIKK…EDELLVDPAF (188 aa)). Residues 4011 to 4085 (APRTEIERVL…DLVLIVQQGS (75 aa)) enclose the Carrier 3 domain. Serine 4045 is modified (O-(pantetheine 4'-phosphoryl)serine). The condensation 4 stretch occupies residues 4100 to 4530 (VPQSFAQGRL…GPDVPISTLP (431 aa)). Residues 4582 to 4986 (SYAQLDRESD…FLNDGFVEDV (405 aa)) are adenylation 4. The methyltransferase (M) domain 3 stretch occupies residues 5052–5241 (TSMYDGTEID…ELLVDPAFFT (190 aa)). The region spanning 5503 to 5577 (PPRNSVEATV…DLAAVIQRNS (75 aa)) is the Carrier 4 domain. Residue serine 5537 is modified to O-(pantetheine 4'-phosphoryl)serine. The segment at 5592 to 6023 (VPQSFAQGRL…QPLTPLAVLP (432 aa)) is condensation 5. Residues 6075 to 6478 (TYAQLDQQSD…SHNSVQDAAV (404 aa)) are adenylation 5. The segment at 6545–6729 (WTSMYDGSEI…ELEANEEELL (185 aa)) is methyltransferase (M) domain 4. The region spanning 7000 to 7074 (APRNEIEAIL…DLAASIQRES (75 aa)) is the Carrier 5 domain. Serine 7034 carries the O-(pantetheine 4'-phosphoryl)serine modification. Residues 7092 to 7517 (SFAQGRLWFL…VLDQPLTPIS (426 aa)) form a condensation 6 region. The segment at 7572–7976 (TYAQLDEQSD…DHKSVLAATV (405 aa)) is adenylation 6. The Carrier 6 domain maps to 8060-8134 (PPRDEVEAVL…DLADIIRRGS (75 aa)). The residue at position 8094 (serine 8094) is an O-(pantetheine 4'-phosphoryl)serine. Residues 8152 to 8582 (SFAQGRLWFL…PKQRLMAMPI (431 aa)) are condensation 7. The adenylation 7 stretch occupies residues 8633-9038 (TYADLDGQSN…GHDLVHDAAV (406 aa)). A methyltransferase (M) domain 5 region spans residues 9111–9288 (PVNEMKEWLD…EESEEELLVD (178 aa)). A Carrier 7 domain is found at 9555 to 9629 (APRNDTEIVL…DLAASIEQGS (75 aa)). Serine 9589 bears the O-(pantetheine 4'-phosphoryl)serine mark. Positions 9647-10077 (SYAQGRLWFL…QVSISTMPLT (431 aa)) are condensation 8. The tract at residues 10127-10529 (SYTSLDQKSE…GNKAIHDAAV (403 aa)) is adenylation 8. The segment at 10588 to 10768 (RDFTSWTSMY…DQIRQEVARL (181 aa)) is methyltransferase (M) domain 6. The Carrier 8 domain maps to 11052–11126 (APRNDIEAVL…DLADVVQTGS (75 aa)). Position 11086 is an O-(pantetheine 4'-phosphoryl)serine (serine 11086). Residues 11144 to 11567 (SFSQGRLWFL…HANLATLPLT (424 aa)) form a condensation 9 region. Residues 11616-12019 (TYTELDERSS…RDPAISDSAV (404 aa)) form an adenylation 9 region. The 75-residue stretch at 12124–12198 (APRNDIETII…QLAASIQQGS (75 aa)) folds into the Carrier 9 domain. Residue serine 12158 is modified to O-(pantetheine 4'-phosphoryl)serine. The interval 12216–12645 (SFAQGRLWFL…IAISTMPLVD (430 aa)) is condensation 10. The adenylation 10 stretch occupies residues 12696 to 13096 (TYAELDQQSD…SDSSINDAVV (401 aa)). The methyltransferase (M) domain 7 stretch occupies residues 13162–13343 (YDGSLIPREE…EDDEEELLVD (182 aa)). A Carrier 10 domain is found at 13620–13694 (APRTEIEVVL…DLAASILQGS (75 aa)). Serine 13654 carries the post-translational modification O-(pantetheine 4'-phosphoryl)serine. The condensation 11 stretch occupies residues 13710-14143 (EQSFAQGRLW…PQSPIATMPL (434 aa)). The interval 14194–14598 (TYAELDRLSD…SENSVTDAAV (405 aa)) is adenylation 11. A Carrier 11 domain is found at 14695–14769 (APRNETEAAI…SLAGKLEQQQ (75 aa)). At serine 14729 the chain carries O-(pantetheine 4'-phosphoryl)serine. The segment at 14814–15158 (DMYPATQTQI…HPEAEIEGQQ (345 aa)) is condensation 12. Positions 15169–15224 (QARQANGHAPNGTNGTNGTNGTNGANGTNGTNGTNGTHANGINGSNGVNGRDSNVV) are disordered. A compositionally biased stretch (low complexity) spans 15173-15211 (ANGHAPNGTNGTNGTNGTNGANGTNGTNGTNGTHANGIN). Residues 15213 to 15224 (SNGVNGRDSNVV) are compositionally biased toward polar residues.

Belongs to the NRP synthetase family. The cofactor is pantetheine 4'-phosphate.

Nonribosomal peptide synthetase; part of the gene cluster that mediates the biosynthesis of the cycloundecapeptide cyclosporin A (CsA), a compound with antifungal activity used as an immunosuppressant drug. Cyclosporin A contains three non-proteinogenic amino acids: D-alanine, alpha-amino butyric acid and the unusual amino acid (4R)-4-[(E)-2-butenyl]-4-methyl-l-threonine (Bmt). The nonribosomal peptide synthetase (NRPS) catalyzes the elongation and cyclization of the undecapeptide chain. SimA contains 11 modules responsible for sequential uptake of substrates and chain elongation. In addition to the core condensation-adenylation-thiolation (C-A-T) domains present in each module, seven modules contain an additional N-methylation (M) domain (modules 2, 3, 4, 5, 7, 8, and 10). The terminal C domain (C12 or Ct) is implicated in cyclization of the peptidyl chains to form CsA. The first module (A1) takes up D-Ala which is provided by the alanine racemase simB. The A2, A3, A8, and A10 domains have the same substrate-specific signature for recognition of leucine residues. The unusual amino acid (4R)-4-[(E)-2-butenyl]-4-methyl-l-threonine (Bmt) is recognized by the fifth module (A5). The A11 domain recognizes L-Ala. The PKS simG mediates the biosynthesis of 3R-hydroxyl-4R-methyl-6E-octenoic acid from acetyl coenzyme A (acetyl-CoA), malonyl-CoA, and S-adenosylmethionine, and 3R-hydroxyl-4R-methyl-6E-octenoic acid is then be repeatedly oxidized by simI to 3R-hydroxy-4R-methyl-2-keto-6E-octenoic acid. The latter is likely converted to Bmt through the action of the aminotransferase SimJ. This Tolypocladium inflatum (Cyclosporin fungus) protein is Cyclosporin synthetase simA.